The following is an 81-amino-acid chain: High-potential iron-sulfur protein (81 aa).

[4Fe-4S] cluster-binding residues include C43, C46, C59, and C73.

The protein belongs to the high-potential iron-sulfur protein (HiPIP) family. In terms of assembly, homodimer.

In terms of biological role, specific class of high-redox-potential 4Fe-4S ferredoxins. Functions in anaerobic electron transport in most purple and in some other photosynthetic bacteria and in at least one genus (Paracoccus) of halophilic, denitrifying bacteria. The polypeptide is High-potential iron-sulfur protein (hip) (Thiococcus pfennigii (Thiocapsa pfennigii)).